The following is a 91-amino-acid chain: PqqA binding protein (91 aa).

It belongs to the PqqD family. Monomer. Interacts with PqqE.

Its pathway is cofactor biosynthesis; pyrroloquinoline quinone biosynthesis. Functionally, functions as a PqqA binding protein and presents PqqA to PqqE, in the pyrroloquinoline quinone (PQQ) biosynthetic pathway. In Pseudomonas fluorescens (strain SBW25), this protein is PqqA binding protein.